Reading from the N-terminus, the 102-residue chain is Small ribosomal subunit protein eS24 (102 aa).

The protein belongs to the eukaryotic ribosomal protein eS24 family.

The protein is Small ribosomal subunit protein eS24 of Methanococcus aeolicus (strain ATCC BAA-1280 / DSM 17508 / OCM 812 / Nankai-3).